The following is a 103-amino-acid chain: Large ribosomal subunit protein uL24 (103 aa).

Belongs to the universal ribosomal protein uL24 family. In terms of assembly, part of the 50S ribosomal subunit.

In terms of biological role, one of two assembly initiator proteins, it binds directly to the 5'-end of the 23S rRNA, where it nucleates assembly of the 50S subunit. One of the proteins that surrounds the polypeptide exit tunnel on the outside of the subunit. The polypeptide is Large ribosomal subunit protein uL24 (Haemophilus influenzae (strain PittEE)).